Here is a 591-residue protein sequence, read N- to C-terminus: Aspartate--tRNA ligase (591 aa).

E176 is a binding site for L-aspartate. The tract at residues 200–203 is aspartate; it reads QILK. R222 lines the L-aspartate pocket. Residues 222-224 and Q231 contribute to the ATP site; that span reads RDE. Residue H450 coordinates L-aspartate. ATP is bound at residue E484. L-aspartate is bound at residue R491. An ATP-binding site is contributed by 536-539; the sequence is GLDR.

The protein belongs to the class-II aminoacyl-tRNA synthetase family. Type 1 subfamily. In terms of assembly, homodimer.

The protein resides in the cytoplasm. It catalyses the reaction tRNA(Asp) + L-aspartate + ATP = L-aspartyl-tRNA(Asp) + AMP + diphosphate. Functionally, catalyzes the attachment of L-aspartate to tRNA(Asp) in a two-step reaction: L-aspartate is first activated by ATP to form Asp-AMP and then transferred to the acceptor end of tRNA(Asp). This Listeria monocytogenes serovar 1/2a (strain ATCC BAA-679 / EGD-e) protein is Aspartate--tRNA ligase.